Here is a 192-residue protein sequence, read N- to C-terminus: Imidazoleglycerol-phosphate dehydratase (192 aa).

It belongs to the imidazoleglycerol-phosphate dehydratase family.

Its subcellular location is the cytoplasm. It carries out the reaction D-erythro-1-(imidazol-4-yl)glycerol 3-phosphate = 3-(imidazol-4-yl)-2-oxopropyl phosphate + H2O. It participates in amino-acid biosynthesis; L-histidine biosynthesis; L-histidine from 5-phospho-alpha-D-ribose 1-diphosphate: step 6/9. The sequence is that of Imidazoleglycerol-phosphate dehydratase from Staphylococcus saprophyticus subsp. saprophyticus (strain ATCC 15305 / DSM 20229 / NCIMB 8711 / NCTC 7292 / S-41).